The chain runs to 429 residues: Adenylosuccinate synthetase (429 aa).

GTP is bound by residues Gly-12–Lys-18 and Gly-40–Thr-42. Asp-13 functions as the Proton acceptor in the catalytic mechanism. Mg(2+) is bound by residues Asp-13 and Gly-40. IMP-binding positions include Asp-13 to Lys-16, Asn-38 to His-41, Thr-129, Arg-143, Gln-224, Thr-239, and Arg-303. The active-site Proton donor is the His-41. Val-299–Arg-305 contributes to the substrate binding site. Residues Arg-305, Lys-331–Asp-333, and Gly-413–Gly-415 contribute to the GTP site.

Belongs to the adenylosuccinate synthetase family. In terms of assembly, homodimer. The cofactor is Mg(2+).

It is found in the cytoplasm. The catalysed reaction is IMP + L-aspartate + GTP = N(6)-(1,2-dicarboxyethyl)-AMP + GDP + phosphate + 2 H(+). It participates in purine metabolism; AMP biosynthesis via de novo pathway; AMP from IMP: step 1/2. In terms of biological role, plays an important role in the de novo pathway of purine nucleotide biosynthesis. Catalyzes the first committed step in the biosynthesis of AMP from IMP. This is Adenylosuccinate synthetase from Rhodococcus erythropolis (strain PR4 / NBRC 100887).